The sequence spans 97 residues: Co-chaperonin GroES (97 aa).

The protein belongs to the GroES chaperonin family. Heptamer of 7 subunits arranged in a ring. Interacts with the chaperonin GroEL.

The protein resides in the cytoplasm. Its function is as follows. Together with the chaperonin GroEL, plays an essential role in assisting protein folding. The GroEL-GroES system forms a nano-cage that allows encapsulation of the non-native substrate proteins and provides a physical environment optimized to promote and accelerate protein folding. GroES binds to the apical surface of the GroEL ring, thereby capping the opening of the GroEL channel. This chain is Co-chaperonin GroES, found in Pseudomonas putida (strain ATCC 700007 / DSM 6899 / JCM 31910 / BCRC 17059 / LMG 24140 / F1).